Consider the following 235-residue polypeptide: tRNA (adenine(37)-N6)-methyltransferase (235 aa).

In terms of domain architecture, TsaA-like spans Phe6 to Asp147. Residues Pro23–Gln25, His64–Gln65, Arg92, and Val127–Thr130 contribute to the S-adenosyl-L-methionine site.

The protein belongs to the tRNA methyltransferase O family. Homodimer.

It carries out the reaction N(6)-L-threonylcarbamoyladenosine(37) in tRNA + S-adenosyl-L-methionine = N(6)-methyl,N(6)-L-threonylcarbamoyladenosine(37) in tRNA + S-adenosyl-L-homocysteine + H(+). In terms of biological role, S-adenosyl-L-methionine-dependent methyltransferase responsible for the addition of the methyl group in the formation of N6-methyl-N6-threonylcarbamoyladenosine at position 37 (m(6)t(6)A37) of the tRNA anticodon loop of tRNA(Thr)(GGU) that read codons starting with adenosine. The methyl group of m(6)t(6)A37 appears to slightly improve the efficiency of the tRNA decoding ability. The sequence is that of tRNA (adenine(37)-N6)-methyltransferase from Escherichia coli (strain K12).